The following is a 738-amino-acid chain: Catalase-peroxidase (738 aa).

The span at 1-13 shows a compositional bias: gly residues; it reads MDGQDIGAGGGCP. The tract at residues 1-26 is disordered; that stretch reads MDGQDIGAGGGCPFSGANTNKGRRSN. The segment at residues 98–226 is a cross-link (tryptophyl-tyrosyl-methioninium (Trp-Tyr) (with M-252)); the sequence is WHSAGTYRTA…LAAVQMGLIY (129 aa). H99 (proton acceptor) is an active-site residue. Positions 226–252 form a cross-link, tryptophyl-tyrosyl-methioninium (Tyr-Met) (with W-98); it reads YVNPEGPDGNPDPIASGRDIRETFARM. H267 contacts heme b.

Belongs to the peroxidase family. Peroxidase/catalase subfamily. In terms of assembly, homodimer or homotetramer. Requires heme b as cofactor. In terms of processing, formation of the three residue Trp-Tyr-Met cross-link is important for the catalase, but not the peroxidase activity of the enzyme.

The enzyme catalyses H2O2 + AH2 = A + 2 H2O. The catalysed reaction is 2 H2O2 = O2 + 2 H2O. Functionally, bifunctional enzyme with both catalase and broad-spectrum peroxidase activity. In Ruegeria sp. (strain TM1040) (Silicibacter sp.), this protein is Catalase-peroxidase.